The chain runs to 171 residues: dCTP pyrophosphatase (171 aa).

The enzyme catalyses dCTP + H2O = dCMP + diphosphate + H(+). This chain is dCTP pyrophosphatase (56), found in Enterobacteria phage T4 (Bacteriophage T4).